Reading from the N-terminus, the 122-residue chain is Large ribosomal subunit protein uL14 (122 aa).

It belongs to the universal ribosomal protein uL14 family. As to quaternary structure, part of the 50S ribosomal subunit. Forms a cluster with proteins L3 and L19. In the 70S ribosome, L14 and L19 interact and together make contacts with the 16S rRNA in bridges B5 and B8.

Functionally, binds to 23S rRNA. Forms part of two intersubunit bridges in the 70S ribosome. This chain is Large ribosomal subunit protein uL14, found in Polynucleobacter necessarius subsp. necessarius (strain STIR1).